Reading from the N-terminus, the 485-residue chain is N-succinylglutamate 5-semialdehyde dehydrogenase (485 aa).

220 to 225 (GSANTG) serves as a coordination point for NAD(+). Residues glutamate 243 and cysteine 278 contribute to the active site.

Belongs to the aldehyde dehydrogenase family. AstD subfamily.

It catalyses the reaction N-succinyl-L-glutamate 5-semialdehyde + NAD(+) + H2O = N-succinyl-L-glutamate + NADH + 2 H(+). It functions in the pathway amino-acid degradation; L-arginine degradation via AST pathway; L-glutamate and succinate from L-arginine: step 4/5. Its function is as follows. Catalyzes the NAD-dependent reduction of succinylglutamate semialdehyde into succinylglutamate. In Vibrio cholerae serotype O1 (strain M66-2), this protein is N-succinylglutamate 5-semialdehyde dehydrogenase.